The sequence spans 1189 residues: Phosphinothricin tripeptide synthetase PhsB (1189 aa).

In terms of domain architecture, Carrier 1 spans 5 to 80; it reads QTDDVVTGRI…ALAKRIRASR (76 aa). An O-(pantetheine 4'-phosphoryl)serine modification is found at Ser40. Disordered regions lie at residues 75–97 and 454–476; these read RIRA…PVDS and TPDR…GGDT. The interval 100 to 541 is condensation; sequence TAPLTFQQEP…VALLPLQEPA (442 aa). Positions 455 to 472 are enriched in basic and acidic residues; it reads PDRDGREPGEGPFAREES. Positions 572–969 are adenylation; sequence AQAHRTPDAV…GREDGQVKLR (398 aa). The disordered stretch occupies residues 1045 to 1081; that stretch reads DRVPLTPSGKTDRKALPDPAAGEQPRSGRGAAPGTPA. One can recognise a Carrier 2 domain in the interval 1076–1151; the sequence is APGTPAEREL…DFALAVVTAQ (76 aa). At Ser1111 the chain carries O-(pantetheine 4'-phosphoryl)serine.

It belongs to the NRP synthetase family. Pantetheine 4'-phosphate is required as a cofactor.

It catalyses the reaction holo-[peptidyl-carrier protein] + L-alanine + ATP = L-alanyl-[peptidyl-carrier protein] + AMP + diphosphate. The protein operates within secondary metabolite biosynthesis; bialaphos biosynthesis. Involved in the biosynthesis of phosphinothricin tripeptide (PTT), also known as bialaphos (BA), a natural-product antibiotic and potent herbicide. Adenylates L-alanine and loads it onto a peptidyl carrier domain via a thioester linkage to the phosphopanthetheine moiety. Shows weaker activity with aminobutyric acid and L-serine. This is Phosphinothricin tripeptide synthetase PhsB from Streptomyces viridochromogenes (strain DSM 40736 / JCM 4977 / BCRC 1201 / Tue 494).